The primary structure comprises 256 residues: MSLLQDIVVIITGSASGIGLATATAALSQGARILGVDVSSAPVSLNEHPNYKFMQGDLTHETTPRQVVETCIKEFGGRIDGLLNIAGIMDQNSSVDSLSDYMWERCIAVNLTAPVKLMREVIPIMRQQQSGSIVNVGSKAATSGASSGVAYTASKHGLMGATKNVAWRYKQEGIRCNAVCPGGVPTGIVQASDPSTWDKDALGTMSLIHQAHAADRQKGLGVEAEDIADCLLFLISSQSKRINGAIIPIDNAWSVI.

Positions 11, 57, 119, 151, 155, and 184 each coordinate NADP(+). Residue tyrosine 151 is the Proton acceptor of the active site. Lysine 155 (lowers pKa of active site Tyr) is an active-site residue.

It belongs to the short-chain dehydrogenases/reductases (SDR) family.

It functions in the pathway secondary metabolite biosynthesis; terpenoid biosynthesis. Its function is as follows. Short chain dehydrogenase; part of the gene cluster that mediates the biosynthesis of andrastins, meroterpenoid compounds that exhibit inhibitory activity against ras farnesyltransferase, suggesting that they could be promising leads for antitumor agents. The first step of the pathway is the synthesis of 3,5-dimethylorsellinic acid (DMOA) by the polyketide synthase adrD via condensation of one acetyl-CoA starter unit with 3 malonyl-CoA units and 2 methylations. DMAO is then converted to farnesyl-DMAO by the prenyltransferase adrG. The methyltransferase adrK catalyzes the methylation of the carboxyl group of farnesyl-DMAO to farnesyl-DMAO methyl ester which is further converted to epoxyfarnesyl-DMAO methyl ester by the FAD-dependent monooxygenase adrH. The terpene cyclase adrI then catalyzes the carbon skeletal rearrangement to generate the andrastin E, the first compound in the pathway having the andrastin scaffold, with the tetracyclic ring system. The post-cyclization tailoring enzymes adrF, adrE, adrJ, and adrA, are involved in the conversion of andrastin E into andrastin A. The short chain dehydrogenase adrF is responsible for the oxidation of the C-3 a hydroxyl group of andrastin E to yield the corresponding ketone, andrastin D. The ketoreductase adrE stereoselectively reduces the carbonyl moiety to reverse the stereochemistry of the C-3 position to yield andrastin F. The acetyltransferase adrJ is the acetyltransferase that attaches the acetyl group to the C-3 hydroxyl group of andrastin F to yield andrastin C. Finally, the cytochrome P450 monooxygenase adrA catalyzes two sequential oxidation reactions of the C-23 methyl group, to generate the corresponding alcohol andrastin B, and aldehyde andrastin A. The sequence is that of Short chain dehydrogenase adrF from Penicillium roqueforti.